The following is a 337-amino-acid chain: 4-hydroxythreonine-4-phosphate dehydrogenase (337 aa).

Positions 138 and 139 each coordinate substrate. Residues histidine 168, histidine 212, and histidine 267 each contribute to the a divalent metal cation site. The substrate site is built by lysine 275, asparagine 284, and arginine 293.

The protein belongs to the PdxA family. Homodimer. Requires Zn(2+) as cofactor. Mg(2+) serves as cofactor. Co(2+) is required as a cofactor.

It is found in the cytoplasm. It carries out the reaction 4-(phosphooxy)-L-threonine + NAD(+) = 3-amino-2-oxopropyl phosphate + CO2 + NADH. It functions in the pathway cofactor biosynthesis; pyridoxine 5'-phosphate biosynthesis; pyridoxine 5'-phosphate from D-erythrose 4-phosphate: step 4/5. Its function is as follows. Catalyzes the NAD(P)-dependent oxidation of 4-(phosphooxy)-L-threonine (HTP) into 2-amino-3-oxo-4-(phosphooxy)butyric acid which spontaneously decarboxylates to form 3-amino-2-oxopropyl phosphate (AHAP). This chain is 4-hydroxythreonine-4-phosphate dehydrogenase, found in Beijerinckia indica subsp. indica (strain ATCC 9039 / DSM 1715 / NCIMB 8712).